The primary structure comprises 282 residues: Undecaprenyl-diphosphatase (282 aa).

Transmembrane regions (helical) follow at residues 1-21, 40-60, 85-105, 117-137, 196-216, 229-249, and 258-278; these read MTLF…FLPV, GAAF…IYFY, AAMG…GLLF, YWVS…EWSV, FSFL…LYHT, AITA…AFLI, and SIFI…IAAG.

Belongs to the UppP family.

Its subcellular location is the cell inner membrane. The enzyme catalyses di-trans,octa-cis-undecaprenyl diphosphate + H2O = di-trans,octa-cis-undecaprenyl phosphate + phosphate + H(+). Catalyzes the dephosphorylation of undecaprenyl diphosphate (UPP). Confers resistance to bacitracin. The sequence is that of Undecaprenyl-diphosphatase from Chlorobium phaeobacteroides (strain DSM 266 / SMG 266 / 2430).